A 491-amino-acid polypeptide reads, in one-letter code: Ketol-acid reductoisomerase (NADP(+)) (491 aa).

Residues Ala15–Ser208 form the KARI N-terminal Rossmann domain. NADP(+)-binding positions include Cys45–Gln48, Arg68, Arg76, Ser78, and Asp108–Gln110. The active site involves His132. Gly158 provides a ligand contact to NADP(+). KARI C-terminal knotted domains lie at Ser209 to Gln344 and Phe345 to Met484. Positions 217, 221, 389, and 393 each coordinate Mg(2+). Residue Ser414 participates in substrate binding.

The protein belongs to the ketol-acid reductoisomerase family. Requires Mg(2+) as cofactor.

The enzyme catalyses (2R)-2,3-dihydroxy-3-methylbutanoate + NADP(+) = (2S)-2-acetolactate + NADPH + H(+). The catalysed reaction is (2R,3R)-2,3-dihydroxy-3-methylpentanoate + NADP(+) = (S)-2-ethyl-2-hydroxy-3-oxobutanoate + NADPH + H(+). Its pathway is amino-acid biosynthesis; L-isoleucine biosynthesis; L-isoleucine from 2-oxobutanoate: step 2/4. The protein operates within amino-acid biosynthesis; L-valine biosynthesis; L-valine from pyruvate: step 2/4. In terms of biological role, involved in the biosynthesis of branched-chain amino acids (BCAA). Catalyzes an alkyl-migration followed by a ketol-acid reduction of (S)-2-acetolactate (S2AL) to yield (R)-2,3-dihydroxy-isovalerate. In the isomerase reaction, S2AL is rearranged via a Mg-dependent methyl migration to produce 3-hydroxy-3-methyl-2-ketobutyrate (HMKB). In the reductase reaction, this 2-ketoacid undergoes a metal-dependent reduction by NADPH to yield (R)-2,3-dihydroxy-isovalerate. The sequence is that of Ketol-acid reductoisomerase (NADP(+)) from Salmonella schwarzengrund (strain CVM19633).